Reading from the N-terminus, the 89-residue chain is Small ribosomal subunit protein uS15 (89 aa).

This sequence belongs to the universal ribosomal protein uS15 family. Part of the 30S ribosomal subunit. Forms a bridge to the 50S subunit in the 70S ribosome, contacting the 23S rRNA.

Its function is as follows. One of the primary rRNA binding proteins, it binds directly to 16S rRNA where it helps nucleate assembly of the platform of the 30S subunit by binding and bridging several RNA helices of the 16S rRNA. In terms of biological role, forms an intersubunit bridge (bridge B4) with the 23S rRNA of the 50S subunit in the ribosome. This is Small ribosomal subunit protein uS15 from Mycobacterium bovis (strain ATCC BAA-935 / AF2122/97).